We begin with the raw amino-acid sequence, 203 residues long: Ras-related protein Rab5A (203 aa).

Gly-18–Ser-26 serves as a coordination point for GTP. Positions Gln-40–Phe-48 match the Effector region motif. Residues Asp-66 to Gln-70, Asn-124 to Asp-127, and Ser-154 to Ala-155 contribute to the GTP site. 2 S-geranylgeranyl cysteine lipidation sites follow: Cys-201 and Cys-202.

The protein belongs to the small GTPase superfamily. Rab family. As to quaternary structure, interacts with VPS9A. Interacts with NSF and RBP-L. Highly expressed in roots. Expressed at low levels in shoots, flowers and grains.

It localises to the prevacuolar compartment membrane. The protein localises to the golgi apparatus membrane. It is found in the cell membrane. Its subcellular location is the protein storage vacuole membrane. Its function is as follows. Plays an important role in intracellular trafficking of seed storage proteins to the protein storage vacuoles (PSVs). Participates in the transport of the proglutelins from the Golgi apparatus to the PSVs in endosperm. Functions cooperatively with VPS9A to regulate post-Golgi dense vesicle-mediated transport of storage proteins to the type II protein bodies (PBII) protein storage vacuoles in developing endosperm. Involved in the maintenance of the general structural organization of the endomembrane system in developing endosperm. Binds GTP in vitro. Forms a quaternary complex with the two glutelin zipcode RNA-binding proteins RBP-L and RBP-P, and the membrane trafficking factor NSF. This quaternay complex carries glutelin mRNAs for active transport on endosomes to the cortical endoplasmic reticulum membrane, and enables endosome-mediated glutelin mRNA transport in endosperm cells. The polypeptide is Ras-related protein Rab5A (Oryza sativa subsp. japonica (Rice)).